The following is a 426-amino-acid chain: Cytochrome c biogenesis protein Ccs1 (426 aa).

3 helical membrane passes run 11–31, 70–90, and 153–173; these read LKFA…GSII, NFWF…CTFF, and IAPV…IFAS.

The protein belongs to the Ccs1/CcsB family. In terms of assembly, may interact with CcsA.

The protein localises to the plastid. It is found in the chloroplast thylakoid membrane. Functionally, required during biogenesis of c-type cytochromes (cytochrome c6 and cytochrome f) at the step of heme attachment. The polypeptide is Cytochrome c biogenesis protein Ccs1 (Heterosigma akashiwo (strain CCMP452 / OLISTH)).